The primary structure comprises 383 residues: MSLKQHTQTIFRQQFDRESDITIKAPGRVNLIGEHTDYNDGFVLPCAINYETVISCGKRGDRQIRVIAADYENQQDIFSLDAPIVPHPEYRWADYVRGVVKHLQMRNADFGGADLVICGNVPQGAGLSSSASLEVAVGQALQSLYQLPLSGVELALNGQEAENQFVGCNCGIMDQLISALGKKDHALLIDCRTLETRAVPMPENMAVVIINSNIQRGLVDSEYNTRRQQCEAAARFFGVKALRDVEPSLFFSIQDELDPVVAKRARHVISENARTLAAADALAAGNLKLMGQLMQESHISMRDDFEITVPPIDRLVEIVKSVIGDQGGVRMTGGGFGGCIVALMPLELVEQVRTTVAQEYPAHSGGKKETFYVCQASQGAGLC.

34–37 contacts substrate; that stretch reads EHTD. 124-130 lines the ATP pocket; the sequence is GAGLSSS. 2 residues coordinate Mg(2+): serine 130 and glutamate 162. Aspartate 174 functions as the Proton acceptor in the catalytic mechanism. A substrate-binding site is contributed by tyrosine 223.

Belongs to the GHMP kinase family. GalK subfamily.

The protein resides in the cytoplasm. The enzyme catalyses alpha-D-galactose + ATP = alpha-D-galactose 1-phosphate + ADP + H(+). Its pathway is carbohydrate metabolism; galactose metabolism. Functionally, catalyzes the transfer of the gamma-phosphate of ATP to D-galactose to form alpha-D-galactose-1-phosphate (Gal-1-P). This is Galactokinase from Yersinia pseudotuberculosis serotype IB (strain PB1/+).